Consider the following 430-residue polypeptide: MTVTQLRSAGRLAQLAGHVNGARQFSTRPALRKELQDAYILSAARTPTAKFNGSFLSVSAPKLGAVAIKAALEKSKVPVEKITDVYMGNVLQGSVGQAPARQAVIFAGLPKEIEATTINKVCASGLKAVTLAAQNIQMGLSEAQIAGGMENMSQVPYYVSRASGLPAFGHVKMEDGLIKDGLTDVYDQFHMGNCAENTVKNHNITREQQDEYAIQSYRNAQKAWEDKAFADEIAPVTVKSRKGETVIDTDEGFKDVKFDKIPSLKPAFVRDGSGTVTAANSSTLNDGASALVLGSKAIAQQYGSGSRVLAKICGYADAATAPIDFPVAPAKAVPIALERAGITKDQVAIWEFNEAFASVILANSKILGLEGAKVNPLGGAISLGHALGSSGSRILTTLLHQLKPGEYGVAAICNGGGAATALVVQRVESV.

A mitochondrion-targeting transit peptide spans Met-1–Arg-32. Cys-122 acts as the Acyl-thioester intermediate in catalysis. Position 217 (Tyr-217) interacts with K(+). Lys-260 lines the CoA pocket. Ala-278 serves as a coordination point for K(+). Residue Ser-282 coordinates CoA. Catalysis depends on proton acceptor residues His-385 and Cys-413. Residue Asn-414 coordinates chloride.

This sequence belongs to the thiolase-like superfamily. Thiolase family. As to quaternary structure, homotetramer. K(+) serves as cofactor.

It localises to the mitochondrion. The enzyme catalyses 2 acetyl-CoA = acetoacetyl-CoA + CoA. Its function is as follows. Mitochondrial acetyl-CoA acetyltransferase that catalyzes both the formation and degradation of acetoacetyl-CoA. Seems not to be involved in ergosterol biosynthesis. Plays an important role in growth, morphogenesis and maintaining mitochondrial function including the response to oxidative stresses. The polypeptide is Acetyl-CoA acetyltransferase FG05087, mitochondrial (Gibberella zeae (strain ATCC MYA-4620 / CBS 123657 / FGSC 9075 / NRRL 31084 / PH-1) (Wheat head blight fungus)).